The primary structure comprises 232 residues: Zinc import ATP-binding protein ZnuC (232 aa).

Positions 5–220 (VNLKNIFVFY…PSFIEMFGCY (216 aa)) constitute an ABC transporter domain. Position 37 to 44 (37 to 44 (GPNGSGKS)) interacts with ATP.

Belongs to the ABC transporter superfamily. Zinc importer (TC 3.A.1.15.5) family. In terms of assembly, the complex is composed of two ATP-binding proteins (ZnuC), two transmembrane proteins (ZnuB) and a solute-binding protein (ZnuA).

Its subcellular location is the cell membrane. The catalysed reaction is Zn(2+)(out) + ATP(in) + H2O(in) = Zn(2+)(in) + ADP(in) + phosphate(in) + H(+)(in). Part of the ABC transporter complex ZnuABC involved in zinc import. Responsible for energy coupling to the transport system. The protein is Zinc import ATP-binding protein ZnuC of Wigglesworthia glossinidia brevipalpis.